The chain runs to 93 residues: Alpha-defensin 1 (93 aa).

The first 19 residues, 1–19 (MKKLVLLFALVLLGFQVQA), serve as a signal peptide directing secretion. Positions 20–58 (DSIQNTDEETKTEEQPGEEDQAVSVSFGDPEGTSLQEES) are excised as a propeptide. Residues 24–54 (NTDEETKTEEQPGEEDQAVSVSFGDPEGTSL) are disordered. Disulfide bonds link Cys-64/Cys-92, Cys-66/Cys-81, and Cys-71/Cys-91.

The protein belongs to the alpha-defensin family. Paneth cells of the small bowel.

The protein resides in the secreted. Functionally, probably contributes to the antimicrobial barrier function of the small bowel mucosa. Has antibacterial activity against attenuated mutants of S.typhimurium. The sequence is that of Alpha-defensin 1 (Defa1) from Mus musculus (Mouse).